A 131-amino-acid chain; its full sequence is 1,4-dihydroxy-2-naphthoyl-CoA hydrolase (131 aa).

Aspartate 7 is a catalytic residue.

The protein belongs to the 4-hydroxybenzoyl-CoA thioesterase family. DHNA-CoA hydrolase subfamily.

The catalysed reaction is 1,4-dihydroxy-2-naphthoyl-CoA + H2O = 1,4-dihydroxy-2-naphthoate + CoA + H(+). Its pathway is cofactor biosynthesis; phylloquinone biosynthesis. The protein operates within quinol/quinone metabolism; 1,4-dihydroxy-2-naphthoate biosynthesis; 1,4-dihydroxy-2-naphthoate from chorismate: step 7/7. In terms of biological role, catalyzes the hydrolysis of 1,4-dihydroxy-2-naphthoyl-CoA (DHNA-CoA) to 1,4-dihydroxy-2-naphthoate (DHNA), a reaction involved in phylloquinone (vitamin K1) biosynthesis. The chain is 1,4-dihydroxy-2-naphthoyl-CoA hydrolase from Synechococcus sp. (strain RCC307).